Here is a 375-residue protein sequence, read N- to C-terminus: 2-heptyl-3-hydroxy-4(1H)-quinolone synthase (375 aa).

The protein belongs to the 3-hydroxybenzoate 6-hydroxylase family.

It catalyses the reaction 2-heptyl-4(1H)-quinolone + NADH + O2 + H(+) = 2-heptyl-3-hydroxy-4(1H)-quinolone + NAD(+) + H2O. Functionally, involved in the degradation pathway of the Pseudomonas aeruginosa quorum sensing signal molecule HHQ (2-heptyl-4(1H)-quinolone) to anthranilate. Catalyzes the hydroxylation of HHQ to PQS (2-heptyl-3-hydroxy-4(1H)-quinolone). This chain is 2-heptyl-3-hydroxy-4(1H)-quinolone synthase, found in Mycobacteroides abscessus (strain ATCC 19977 / DSM 44196 / CCUG 20993 / CIP 104536 / JCM 13569 / NCTC 13031 / TMC 1543 / L948) (Mycobacterium abscessus).